The primary structure comprises 367 residues: Chorismate synthase (367 aa).

NADP(+) contacts are provided by Arg-48 and Arg-54. Residues 125–127 (RSS), 238–239 (NA), Gly-278, 293–297 (KPTSS), and Arg-319 contribute to the FMN site.

This sequence belongs to the chorismate synthase family. As to quaternary structure, homotetramer. FMNH2 is required as a cofactor.

It carries out the reaction 5-O-(1-carboxyvinyl)-3-phosphoshikimate = chorismate + phosphate. It functions in the pathway metabolic intermediate biosynthesis; chorismate biosynthesis; chorismate from D-erythrose 4-phosphate and phosphoenolpyruvate: step 7/7. Catalyzes the anti-1,4-elimination of the C-3 phosphate and the C-6 proR hydrogen from 5-enolpyruvylshikimate-3-phosphate (EPSP) to yield chorismate, which is the branch point compound that serves as the starting substrate for the three terminal pathways of aromatic amino acid biosynthesis. This reaction introduces a second double bond into the aromatic ring system. This is Chorismate synthase from Xanthomonas campestris pv. campestris (strain 8004).